Consider the following 648-residue polypeptide: Penicillin-binding protein PbpB (648 aa).

The interval 1 to 35 (MSRRGDRPRTPAQPRKKARVDQPRSARTRRTRVSE) is disordered. The chain crosses the membrane as a helical span at residues 52 to 72 (GNLAILAVLVIAAVQLFMLQV). Catalysis depends on Ser-355, which acts as the Acyl-ester intermediate.

This sequence belongs to the transpeptidase family. As to quaternary structure, interacts with Wag31.

It is found in the cell membrane. The protein is Penicillin-binding protein PbpB (pbpB) of Mycolicibacterium smegmatis (strain ATCC 700084 / mc(2)155) (Mycobacterium smegmatis).